Consider the following 246-residue polypeptide: Polyhedrin (246 aa).

It belongs to the polyhedrin family.

Its function is as follows. Major component of the virus occlusion bodies, which are large proteinaceous structures (polyhedra), that protect the virus from the outside environment for extended periods until they are ingested by insect larvae. In Lepidoptera (butterflies and moths), this protein is Polyhedrin (PH).